The sequence spans 79 residues: Small ribosomal subunit protein bS18 (79 aa).

It belongs to the bacterial ribosomal protein bS18 family. In terms of assembly, part of the 30S ribosomal subunit. Forms a tight heterodimer with protein bS6.

Its function is as follows. Binds as a heterodimer with protein bS6 to the central domain of the 16S rRNA, where it helps stabilize the platform of the 30S subunit. In Bacillus licheniformis (strain ATCC 14580 / DSM 13 / JCM 2505 / CCUG 7422 / NBRC 12200 / NCIMB 9375 / NCTC 10341 / NRRL NRS-1264 / Gibson 46), this protein is Small ribosomal subunit protein bS18.